A 72-amino-acid polypeptide reads, in one-letter code: Crustacean hyperglycemic hormone B (72 aa).

Glutamine 1 carries the post-translational modification Pyrrolidone carboxylic acid. At phenylalanine 3 the chain carries D-phenylalanine; in form CHHB-II. Intrachain disulfides connect cysteine 7-cysteine 43, cysteine 23-cysteine 39, and cysteine 26-cysteine 52. At valine 72 the chain carries Valine amide.

Post-translationally, stereoinversion of L-Phe (in CHHB-I) to D-Phe (in CHHB-II).

It localises to the secreted. In terms of biological role, hormone found in the sinus gland of isopods and decapods which controls the blood sugar level. Has a secretagogue action over the amylase released from the midgut gland. May act as a stress hormone and may be involved in the control of molting and reproduction. The polypeptide is Crustacean hyperglycemic hormone B (Cherax destructor (Common yabby crayfish)).